Reading from the N-terminus, the 237-residue chain is uncharacterized protein (237 aa).

Residues 213-237 (GQGKYLKLDSNTTENKTTKQNETGG) form a disordered region. A compositionally biased stretch (low complexity) spans 223-237 (NTTENKTTKQNETGG).

This is an uncharacterized protein from Methanothermobacter thermautotrophicus (Methanobacterium thermoformicicum).